A 323-amino-acid polypeptide reads, in one-letter code: tRNA dimethylallyltransferase (323 aa).

12–19 (GPTAAGKT) lines the ATP pocket. 14–19 (TAAGKT) contributes to the substrate binding site. Interaction with substrate tRNA stretches follow at residues 37–40 (DSAL) and 161–165 (QRLSR).

The protein belongs to the IPP transferase family. In terms of assembly, monomer. Requires Mg(2+) as cofactor.

It carries out the reaction adenosine(37) in tRNA + dimethylallyl diphosphate = N(6)-dimethylallyladenosine(37) in tRNA + diphosphate. Catalyzes the transfer of a dimethylallyl group onto the adenine at position 37 in tRNAs that read codons beginning with uridine, leading to the formation of N6-(dimethylallyl)adenosine (i(6)A). This is tRNA dimethylallyltransferase from Pseudomonas fluorescens (strain SBW25).